The primary structure comprises 81 residues: Large ribosomal subunit protein bL27 (81 aa).

The segment covering 1-11 (MATSKSGGSSK) has biased composition (polar residues). The tract at residues 1–20 (MATSKSGGSSKNGRDSISKR) is disordered.

It belongs to the bacterial ribosomal protein bL27 family.

This Borreliella afzelii (strain PKo) (Borrelia afzelii) protein is Large ribosomal subunit protein bL27.